We begin with the raw amino-acid sequence, 308 residues long: Inactive C-alpha-formylglycine-generating enzyme 2 (308 aa).

An N-terminal signal peptide occupies residues 1–33 (MRSEFWFPSMGSLLPPVLLLWLLSCPRLQLGHA). Cysteines 163 and 297 form a disulfide. N198 carries N-linked (GlcNAc...) asparagine glycosylation. Positions 201, 202, 215, 217, 236, 239, 241, and 243 each coordinate Ca(2+). A compositionally biased stretch (polar residues) spans 281 to 291 (RMGNTPDSASD). The disordered stretch occupies residues 281-308 (RMGNTPDSASDNLGFRCASSAGRPKEDL). A Non-canonical ER retention motif motif is present at residues 305–308 (KEDL).

The protein belongs to the sulfatase-modifying factor family. Homodimer and heterodimer with SUMF1.

Its subcellular location is the endoplasmic reticulum lumen. Functionally, lacks formylglycine generating activity and is unable to convert newly synthesized inactive sulfatases to their active form. Inhibits the activation of sulfatases by SUMF1. The sequence is that of Inactive C-alpha-formylglycine-generating enzyme 2 from Mus musculus (Mouse).